The primary structure comprises 193 residues: Ribosome maturation factor RimM (193 aa).

One can recognise a PRC barrel domain in the interval 112-193 (VDEYYWIDLI…CITVDWGLDF (82 aa)).

It belongs to the RimM family. In terms of assembly, binds ribosomal protein uS19.

The protein resides in the cytoplasm. In terms of biological role, an accessory protein needed during the final step in the assembly of 30S ribosomal subunit, possibly for assembly of the head region. Essential for efficient processing of 16S rRNA. May be needed both before and after RbfA during the maturation of 16S rRNA. It has affinity for free ribosomal 30S subunits but not for 70S ribosomes. The polypeptide is Ribosome maturation factor RimM (Methylibium petroleiphilum (strain ATCC BAA-1232 / LMG 22953 / PM1)).